The following is a 297-amino-acid chain: TATA-box-binding protein (297 aa).

The tract at residues 52–116 (EEQQRQQQQA…ITPATPASES (65 aa)) is disordered. Composition is skewed to low complexity over residues 56–78 (RQQQQAQQSTSQQGNQGSGQTPQ) and 104–114 (MTPITPATPAS). Repeat copies occupy residues 123-199 (LQNI…ARVV) and 213-290 (IQNM…YPIL).

Belongs to the TBP family. In terms of assembly, belongs to the TFIID complex together with the TBP-associated factors (TAFs). Binds DNA as monomer. In terms of processing, the N-terminal domain is extensively phosphorylated.

The protein resides in the nucleus. In terms of biological role, general transcription factor that functions at the core of the DNA-binding multiprotein factor TFIID. Binding of TFIID to the TATA box is the initial transcriptional step of the pre-initiation complex (PIC), playing a role in the activation of eukaryotic genes transcribed by RNA polymerase II. Members of the TBP family are differentially required to regulate transcription and development during early embryogenesis. Binds to the promoters of select genes. This is TATA-box-binding protein from Xenopus tropicalis (Western clawed frog).